The following is a 520-amino-acid chain: 2-isopropylmalate synthase (520 aa).

Residues 5-267 (VIIFDTTLRD…HTNINHQEIY (263 aa)) form the Pyruvate carboxyltransferase domain. Positions 14, 202, 204, and 238 each coordinate Mn(2+). Residues 392–520 (RLDYFSVQSG…RLQQNNQEMV (129 aa)) form a regulatory domain region.

The protein belongs to the alpha-IPM synthase/homocitrate synthase family. LeuA type 1 subfamily. As to quaternary structure, homodimer. The cofactor is Mn(2+).

It localises to the cytoplasm. It carries out the reaction 3-methyl-2-oxobutanoate + acetyl-CoA + H2O = (2S)-2-isopropylmalate + CoA + H(+). It functions in the pathway amino-acid biosynthesis; L-leucine biosynthesis; L-leucine from 3-methyl-2-oxobutanoate: step 1/4. Catalyzes the condensation of the acetyl group of acetyl-CoA with 3-methyl-2-oxobutanoate (2-ketoisovalerate) to form 3-carboxy-3-hydroxy-4-methylpentanoate (2-isopropylmalate). The chain is 2-isopropylmalate synthase from Yersinia enterocolitica serotype O:8 / biotype 1B (strain NCTC 13174 / 8081).